The chain runs to 167 residues: Peptide deformylase (167 aa).

Fe cation contacts are provided by C90 and H132. The active site involves E133. Residue H136 participates in Fe cation binding.

The protein belongs to the polypeptide deformylase family. Requires Fe(2+) as cofactor.

It carries out the reaction N-terminal N-formyl-L-methionyl-[peptide] + H2O = N-terminal L-methionyl-[peptide] + formate. Its function is as follows. Removes the formyl group from the N-terminal Met of newly synthesized proteins. Requires at least a dipeptide for an efficient rate of reaction. N-terminal L-methionine is a prerequisite for activity but the enzyme has broad specificity at other positions. This is Peptide deformylase from Dehalococcoides mccartyi (strain CBDB1).